The primary structure comprises 315 residues: D-erythronate dehydrogenase (315 aa).

NAD(+) contacts are provided by Ser-119, Tyr-143, and Lys-147. The active-site Proton acceptor is the Tyr-143.

It belongs to the NAD(P)-dependent epimerase/dehydratase family.

It catalyses the reaction D-erythronate + NAD(+) = 2-dehydro-D-erythronate + NADH + H(+). Catalyzes oxidation of D-erythronate to 2-oxo-tetronate. Can use either NAD(+) or NADP(+) as cosubstrate, with a preference for NAD(+). This is D-erythronate dehydrogenase from Haemophilus influenzae (strain ATCC 51907 / DSM 11121 / KW20 / Rd).